The following is a 463-amino-acid chain: Ammonium transporter 1 (463 aa).

Residues 1 to 39 (MVAGEIIKGVAAEITNGSSSSVVQKYLDCANQVAPDPGN) lie on the Extracellular side of the membrane. A helical transmembrane segment spans residues 40 to 60 (TTWVLLSTILVLGMMPALAFF). The Cytoplasmic portion of the chain corresponds to 61–76 (EAGLLRSKNTLSIITQ). Residues 77 to 97 (IMSGIVVLTVMWQAFGYSLTF) form a helical membrane-spanning segment. Residues 98–127 (GPDQKGIIGNLDHAFLINVSYDDCSPNAPN) are Extracellular-facing. The chain crosses the membrane as a helical span at residues 128–148 (IPAAAYAFFMMMFANITPLLM). Topologically, residues 149 to 160 (TGAFAERVKFKA) are cytoplasmic. A helical membrane pass occupies residues 161–181 (FIALTVAWEIIVFYPVAHWIW). Residues 182 to 194 (GGGWLHKYFGVLD) are Extracellular-facing. Residues 195 to 215 (FAGGIVIHTSAGVSALVIALY) traverse the membrane as a helical segment. The Cytoplasmic segment spans residues 216–233 (VGRRKDFEKYGGEFPPSN). A helical transmembrane segment spans residues 234-254 (LPLATIGAALLWMGWFGFNAG). Topologically, residues 255-265 (SALAAGNIATS) are extracellular. Residues 266–286 (AVASTQIGGSFSAIVWIILSA) traverse the membrane as a helical segment. Over 287–293 (AKGKPNT) the chain is Cytoplasmic. Residues 294 to 314 (VSVINGVIAGLAGITPASGYI) traverse the membrane as a helical segment. The Extracellular portion of the chain corresponds to 315 to 316 (NS). The helical transmembrane segment at 317 to 337 (QYSIGLGICLGLASYYSVVLL) threads the bilayer. Residues 338-351 (KHKLHIDDALDVSS) lie on the Cytoplasmic side of the membrane. The helical transmembrane segment at 352 to 372 (VHGLTGIIGSLAIGFCAELSV) threads the bilayer. The Extracellular portion of the chain corresponds to 373-392 (NPNGANGAFYGNPKLIGTQL). Residues 393–413 (LGVVSVAVWAAAWTWVLLKII) traverse the membrane as a helical segment. The Cytoplasmic segment spans residues 414–463 (DATIGVKIDESEEELGLDLVEHGEFAYHNISLQGNENHYSSVINSHDFFK).

The protein belongs to the ammonia transporter channel (TC 1.A.11.2) family.

The protein localises to the cell membrane. The protein resides in the endosome membrane. It localises to the lysosome membrane. Its subcellular location is the cytoplasmic vesicle. It is found in the phagosome membrane. Its function is as follows. Ammonium transporter that mediates the excretion of ammonium. Controls ammonium homeostasis during growth and development. Ammonium has been shown to function as a morphogen at multiple steps during the development. The chain is Ammonium transporter 1 (amtA) from Dictyostelium discoideum (Social amoeba).